Reading from the N-terminus, the 205-residue chain is Phosphoserine phosphatase ThrH (205 aa).

Residue aspartate 7 is the Nucleophile of the active site. The Mg(2+) site is built by aspartate 7 and glutamate 9. Glutamate 9 serves as the catalytic Proton donor. Substrate is bound by residues glutamate 15, arginine 46, 90–91 (SD), and lysine 133. Aspartate 152 is a Mg(2+) binding site. Asparagine 155 is a substrate binding site.

The protein belongs to the thrH family. Mg(2+) is required as a cofactor.

It catalyses the reaction O-phospho-L-serine + H2O = L-serine + phosphate. The catalysed reaction is O-phospho-D-serine + H2O = D-serine + phosphate. It participates in amino-acid biosynthesis; L-serine biosynthesis; L-serine from 3-phospho-D-glycerate: step 3/3. In terms of biological role, phosphoserine phosphatase that mediates dephosphorylation of phosphoserine in the serine biosynthesis pathway. Also able to dephosphorylate other substrates such as phospho-L(or D)-threonine, with lower activity. Shows phosphoserine:homoserine phosphotransferase activity by transferring the phosphoryl group to homoserine using phosphoserine as the phosphoryl group donor. The polypeptide is Phosphoserine phosphatase ThrH (thrH) (Pseudomonas aeruginosa (strain ATCC 15692 / DSM 22644 / CIP 104116 / JCM 14847 / LMG 12228 / 1C / PRS 101 / PAO1)).